Consider the following 123-residue polypeptide: UPF0299 membrane protein VV1471 (123 aa).

A run of 4 helical transmembrane segments spans residues 8-28 (LFGLVVSFGLIFLALTIGSGI), 35-55 (SVPGSVIGMLVLFVSMAIGLV), 71-91 (MILLFVPISVGLMEHFDMLIA), and 94-114 (LPIIASAIGGSLIVLVSLGWL).

The protein belongs to the UPF0299 family.

Its subcellular location is the cell inner membrane. The sequence is that of UPF0299 membrane protein VV1471 from Vibrio vulnificus (strain YJ016).